The sequence spans 932 residues: Adhesion G protein-coupled receptor E2 (932 aa).

Residues 1–15 (MWGFWLLLFWGFSGT) form the signal peptide. Over 16 to 652 (HRWGMTTLAI…TMEFSLYIIS (637 aa)) the chain is Extracellular. 2 consecutive EGF-like domains span residues 32-69 (GVNECQDTTTCPAYATCTDTTESYYCTCKQGFLPSNGQ) and 81-119 (DVNECLRSDSPCGSNSVCTNIPGRARCSCLSGFSSSAGG). Disulfide bonds link cysteine 36–cysteine 48, cysteine 42–cysteine 57, cysteine 85–cysteine 98, cysteine 92–cysteine 107, cysteine 137–cysteine 149, cysteine 143–cysteine 158, cysteine 160–cysteine 171, cysteine 177–cysteine 189, cysteine 183–cysteine 198, cysteine 226–cysteine 239, and cysteine 233–cysteine 248. Residues 133-172 (DVDECLTIGICPKNSNCSNSVGSYSCTCQSGFVSNGSTCE) enclose the EGF-like 3; calcium-binding domain. Asparagine 148 and asparagine 167 each carry an N-linked (GlcNAc...) asparagine glycan. The 38-residue stretch at 173–210 (DEDECVTRNACPEHATCHNTLGSYYCTCNEGLEFSGGG) folds into the EGF-like 4; calcium-binding domain. In terms of domain architecture, EGF-like 5; calcium-binding spans 222–260 (DVDECSRNSTLCGPSFICINTLGSYSCSCPAGFSLSTFQ). N-linked (GlcNAc...) asparagine glycosylation is present at asparagine 229. Asparagine 269, asparagine 283, asparagine 309, asparagine 333, asparagine 344, asparagine 363, asparagine 405, asparagine 417, asparagine 474, and asparagine 499 each carry an N-linked (GlcNAc...) asparagine glycan. The EGF-like 6; calcium-binding domain occupies 272–307 (DIDECDDICPSNSSCTNTLGSYFCTCHPGFASSNGQ). Intrachain disulfides connect cysteine 276/cysteine 286 and cysteine 280/cysteine 295. An EGF-like 7; calcium-binding domain is found at 319-354 (DIDECTQDPFRCGRNSSCTNVPGSYNCSCLPDFRMD). 2 cysteine pairs are disulfide-bonded: cysteine 323–cysteine 336 and cysteine 330–cysteine 345. Residues 482–643 (EYLEIESKVI…AIIMASGELT (162 aa)) enclose the GAIN-B domain. A Cell attachment site motif is present at residues 507-509 (RGD). 2 disulfide bridges follow: cysteine 596–cysteine 625 and cysteine 613–cysteine 627. The segment at 596 to 643 (CVSWNTDVEDGRWTPSGCETVEASETHTVCSCNRMTNLAIIMASGELT) is GPS. Residues 653 to 673 (YVGTVISLVCLALAIATFLLF) traverse the membrane as a helical segment. The Cytoplasmic portion of the chain corresponds to 674 to 681 (RAVQNHNT). Residues 682–702 (YLHLHLCVCLFLAKILFLTGI) form a helical membrane-spanning segment. Topologically, residues 703-719 (DKTDNQTACAIIAGFLH) are extracellular. An N-linked (GlcNAc...) asparagine glycan is attached at asparagine 707. The chain crosses the membrane as a helical span at residues 720 to 740 (YLFLACFFWMLVEAVMLFLMV). The Cytoplasmic portion of the chain corresponds to 741 to 756 (RNLKVVNYFSSRNIKM). The chain crosses the membrane as a helical span at residues 757-777 (LHLCAFGYGLPVVVVIISATV). Over 778–795 (HPWGYGMHNRCWLNTETG) the chain is Extracellular. A helical transmembrane segment spans residues 796 to 816 (FIWSFLGPVCMIITINSALLA). The Cytoplasmic segment spans residues 817-849 (WTLWVLRQKLCSVNSEVSKLKDTRLLTFKAIAQ). Residues 850–870 (IFILGCSWVLGIFQIGPLASI) traverse the membrane as a helical segment. Topologically, residues 871–872 (MA) are extracellular. The chain crosses the membrane as a helical span at residues 873–893 (YLFTTINSLQGAFIFLIHCLL). The Cytoplasmic segment spans residues 894–932 (NRQVRDEYRKLLTRKTDLSSHSQTSGILLSSMPSTSKTG).

The protein belongs to the G-protein coupled receptor 2 family. Adhesion G-protein coupled receptor (ADGR) subfamily.

The protein resides in the cell membrane. Functionally, orphan receptor involved in cell adhesion and probably in cell-cell interactions involved specifically cells of the immune system. May play a role in regulatory T-cells (Treg) development. In Rattus norvegicus (Rat), this protein is Adhesion G protein-coupled receptor E2 (Adgre1).